Here is a 369-residue protein sequence, read N- to C-terminus: NADH-quinone oxidoreductase subunit H (369 aa).

Helical transmembrane passes span 20 to 40 (VLLI…AYLV), 88 to 108 (ICFL…WAVI), 133 to 153 (IGVL…IIAG), 179 to 199 (IGLT…GEIV), 205 to 225 (MPYW…ISSL), 267 to 287 (ILIN…PLNI), 293 to 313 (IPGI…FIWI), and 328 to 348 (LGWK…SGVL).

This sequence belongs to the complex I subunit 1 family. NDH-1 is composed of 14 different subunits. Subunits NuoA, H, J, K, L, M, N constitute the membrane sector of the complex.

Its subcellular location is the cell inner membrane. It catalyses the reaction a quinone + NADH + 5 H(+)(in) = a quinol + NAD(+) + 4 H(+)(out). Functionally, NDH-1 shuttles electrons from NADH, via FMN and iron-sulfur (Fe-S) centers, to quinones in the respiratory chain. The immediate electron acceptor for the enzyme in this species is believed to be ubiquinone. Couples the redox reaction to proton translocation (for every two electrons transferred, four hydrogen ions are translocated across the cytoplasmic membrane), and thus conserves the redox energy in a proton gradient. This subunit may bind ubiquinone. In Ehrlichia canis (strain Jake), this protein is NADH-quinone oxidoreductase subunit H.